The sequence spans 362 residues: Peptide chain release factor 1 (362 aa).

At Q235 the chain carries N5-methylglutamine.

This sequence belongs to the prokaryotic/mitochondrial release factor family. Post-translationally, methylated by PrmC. Methylation increases the termination efficiency of RF1.

The protein resides in the cytoplasm. In terms of biological role, peptide chain release factor 1 directs the termination of translation in response to the peptide chain termination codons UAG and UAA. In Acinetobacter baumannii (strain AYE), this protein is Peptide chain release factor 1.